The chain runs to 163 residues: F-box protein At2g35280 (163 aa).

The 50-residue stretch at 8–57 (ISRLEALPQDLLREIVAKIGVKSAEDYHNCILSCKELGASANDERVLKTL) folds into the F-box domain.

The polypeptide is F-box protein At2g35280 (Arabidopsis thaliana (Mouse-ear cress)).